Here is a 138-residue protein sequence, read N- to C-terminus: Large ribosomal subunit protein uL16 (138 aa).

Residues 1–13 (MLQPKRRKYRKEQ) show a composition bias toward basic residues. Residues 1-22 (MLQPKRRKYRKEQKGRNTGVAT) form a disordered region.

It belongs to the universal ribosomal protein uL16 family. Part of the 50S ribosomal subunit.

Functionally, binds 23S rRNA and is also seen to make contacts with the A and possibly P site tRNAs. In Paraburkholderia phymatum (strain DSM 17167 / CIP 108236 / LMG 21445 / STM815) (Burkholderia phymatum), this protein is Large ribosomal subunit protein uL16.